Reading from the N-terminus, the 906-residue chain is Protein translocase subunit SecA (906 aa).

ATP-binding positions include Q90, 108–112 (GEGKT), and D503. The interval 845-882 (TAAEAPASVPQPQAAVAPQPAPELVGADNGESQPQAWG) is disordered. Residues 846–862 (AAEAPASVPQPQAAVAP) are compositionally biased toward low complexity. Positions 890, 892, 901, and 902 each coordinate Zn(2+).

This sequence belongs to the SecA family. In terms of assembly, monomer and homodimer. Part of the essential Sec protein translocation apparatus which comprises SecA, SecYEG and auxiliary proteins SecDF-YajC and YidC. It depends on Zn(2+) as a cofactor.

The protein resides in the cell inner membrane. It is found in the cytoplasm. The catalysed reaction is ATP + H2O + cellular proteinSide 1 = ADP + phosphate + cellular proteinSide 2.. Part of the Sec protein translocase complex. Interacts with the SecYEG preprotein conducting channel. Has a central role in coupling the hydrolysis of ATP to the transfer of proteins into and across the cell membrane, serving both as a receptor for the preprotein-SecB complex and as an ATP-driven molecular motor driving the stepwise translocation of polypeptide chains across the membrane. The chain is Protein translocase subunit SecA from Cereibacter sphaeroides (strain ATCC 17025 / ATH 2.4.3) (Rhodobacter sphaeroides).